The sequence spans 731 residues: Two pore channel protein 2 (731 aa).

The Cytoplasmic segment spans residues 1 to 68 (MAAEEQPLLG…RWYYSNVCQR (68 aa)). Residues 69 to 89 (VLGFIIFLILILAFVEVPSSF) traverse the membrane as a helical segment. Topologically, residues 90–111 (TKTADVRYRSQPWQPPCGLTET) are extracellular. The chain crosses the membrane as a helical span at residues 112 to 132 (IEAFCLLAFLVDLSVKGYLVG). The Cytoplasmic portion of the chain corresponds to 133-139 (QAQLQQN). The chain crosses the membrane as a helical span at residues 140 to 160 (LWLLAYFMVLVVSVVDWIVSL). Residues 161–167 (SLACEEP) lie on the Extracellular side of the membrane. A helical transmembrane segment spans residues 168-188 (LRMRRLLRPFFLLQNSSMMKK). The tract at residues 187–191 (KKTLK) is interaction with phosphatidylinositol 3,5-bisphosphate. Over 189–203 (TLKCIRWSLPEMASV) the chain is Cytoplasmic. Residues 204–224 (GLLLAIHLCLFTIIGMLLFTI) form a helical membrane-spanning segment. The Extracellular segment spans residues 225–238 (GEKDEAQDQERLAY). The helical; Pore-forming intramembrane region spans 239-263 (FRNLPEALTSLLVLLTTSNNPDVMI). Residues 264-270 (PAYTQNR) lie on the Extracellular side of the membrane. The helical transmembrane segment at 271 to 291 (AFALFFIVFTLIGSLFLMNLL) threads the bilayer. Topologically, residues 292–417 (TAIIYNQFRG…TAQFIFSHHY (126 aa)) are cytoplasmic. A helical transmembrane segment spans residues 418 to 438 (FDYLGNLVALGNLLSICVFLV). The Extracellular portion of the chain corresponds to 439–449 (LDSDLLPGERD). Residues 450–470 (DFVLGILDYIFILYYLLELLF) form a helical membrane-spanning segment. Residues 471–486 (KVFALGLPGYLSYHSN) lie on the Cytoplasmic side of the membrane. The chain crosses the membrane as a helical span at residues 487-507 (VFDGLLTIILLVSEICTLAVY). Residues 508-524 (RLPHSGWKPEQYGPLSL) are Extracellular-facing. The helical transmembrane segment at 525–542 (WDMTRLMNTLIVFRFLRI) threads the bilayer. The Cytoplasmic segment spans residues 543-564 (IPNIKPMAEVANTILGLIPNLR). A helical membrane pass occupies residues 565–585 (AFGGILVVAYYVFAMIGINLF). The Extracellular portion of the chain corresponds to 586–618 (RGVIVPPGNSSLVPDNNSAVCGSFEQLGYWPNN). Asn594 and Asn601 each carry an N-linked (GlcNAc...) asparagine glycan. An intramembrane region (helical; Pore-forming) is located at residues 619–641 (FDDFAAALITLWNVMVVNNWQVI). At 642-656 (LEAYKRYAGPWSMVY) the chain is on the extracellular side. The helical transmembrane segment at 657 to 677 (FVLWWLVSSVIWINLFLALLL) threads the bilayer. Topologically, residues 678–731 (ENFLHRWDPQGHKQLLVGTKQMSVELMFRDILEEPKEEELMEKLHKHPHLHLCR) are cytoplasmic.

The protein belongs to the calcium channel alpha-1 subunit (TC 1.A.1.11) family. Two pore calcium channel subfamily. As to quaternary structure, homodimer. Interacts with LRRK2. Interacts with HAX1. Interacts with MTOR; the interaction is required for TPCN2 ATP sensitivity. Found in a complex with LSM12, TPCN1 and TPCN2. Interacts with LSM12. In terms of processing, N-glycosylated. As to expression, widely expressed. Highly expressed in macrophages. Expressed in pigmented cells.

The protein localises to the late endosome membrane. It localises to the lysosome membrane. The protein resides in the melanosome membrane. It carries out the reaction Ca(2+)(in) = Ca(2+)(out). The enzyme catalyses Na(+)(in) = Na(+)(out). Regulated by Mg(2+) ions, cytosolic Mg(2+) selectively inhibits outward current while lysosomal Mg(2+) modestly inhibits both the outward and inward currents. In the absence of Mg(2+), NAADP readily activates TPCN2, with properties similar to PI(3,5)P2. Na(+) current is inhibited by ATP in a MTORC-dependent manner. ATP sensitivity is independent of PI(3,5)P2. Both current elicited by PI(3,5)P2 as well as NAADP are inhibited by tetrandrine. Its function is as follows. Intracellular channel initially characterized as a non-selective Ca(2+)-permeable channel activated by NAADP (nicotinic acid adenine dinucleotide phosphate), it is also a highly-selective Na(+) channel activated directly by PI(3,5)P2 (phosphatidylinositol 3,5-bisphosphate). Localizes to the lysosomal and late endosome membranes where it regulates organellar membrane excitability, membrane trafficking, and pH homeostasis. Is associated with a plethora of physiological processes, including mTOR-dependent nutrient sensing, skin pigmentation and autophagy. Ion selectivity is not fixed but rather agonist-dependent and under defined ionic conditions, can be readily activated by both NAADP and PI(3,5)P2. As calcium channel, it increases the pH in the lysosomal lumen, as sodium channel, it promotes lysosomal exocytosis. Plays a crucial role in endolysosomal trafficking in the endolysosomal degradation pathway and is potentially involved in the homeostatic control of many macromolecules and cell metabolites. Also expressed in melanosomes of pigmented cells where mediates a Ca(2+) channel and/or PI(3,5)P2-activated melanosomal Na(+) channel to acidify pH and inhibit tyrosinase activity required for melanogenesis and pigmentation. Unlike the voltage-dependent TPCN1, TPCN2 is voltage independent and can be activated solely by PI(3,5)P2 binding. In contrast, PI(4,5)P2, PI(3,4)P2, PI(3)P and PI(5)P have no obvious effect on channel activation. (Microbial infection) During Ebola virus (EBOV) infection, controls the movement of endosomes containing virus particles and is required by EBOV to escape from the endosomal network into the cell cytoplasm. The sequence is that of Two pore channel protein 2 from Mus musculus (Mouse).